Reading from the N-terminus, the 389-residue chain is GTPase Obg (389 aa).

Residues 1-159 (MKFVDEAKIL…REVLLELMLL (159 aa)) enclose the Obg domain. One can recognise an OBG-type G domain in the interval 160 to 333 (ADVGMLGMPN…LCWDIMEFLK (174 aa)). Residues 166–173 (GMPNAGKS), 191–195 (FTTLV), 213–216 (DIPG), 283–286 (NKVD), and 314–316 (AAI) each bind GTP. The Mg(2+) site is built by Ser-173 and Thr-193. The segment at 362-389 (QLENPDLEDDDEDWDEEDDDGVEFIYQR) is disordered. Positions 364–383 (ENPDLEDDDEDWDEEDDDGV) are enriched in acidic residues.

This sequence belongs to the TRAFAC class OBG-HflX-like GTPase superfamily. OBG GTPase family. Monomer. Mg(2+) serves as cofactor.

It localises to the cytoplasm. Functionally, an essential GTPase which binds GTP, GDP and possibly (p)ppGpp with moderate affinity, with high nucleotide exchange rates and a fairly low GTP hydrolysis rate. Plays a role in control of the cell cycle, stress response, ribosome biogenesis and in those bacteria that undergo differentiation, in morphogenesis control. The sequence is that of GTPase Obg from Proteus mirabilis (strain HI4320).